Here is a 718-residue protein sequence, read N- to C-terminus: Protein Smaug homolog 1 (718 aa).

A Phosphoserine modification is found at Ser168. Disordered stretches follow at residues 278 to 323 (ARGP…EEGS), 416 to 474 (KAYS…LQPH), and 572 to 601 (NRGFGQSNSLPTAGSVGGGMGRRNPRQYQI). One can recognise an SAM domain in the interval 323-391 (SGMKDVPAWL…ERQNLLKSLE (69 aa)). At Ser420 the chain carries Phosphoserine. Thr424 is modified (phosphothreonine). The span at 453–466 (GAAATGATATPSAG) shows a compositional bias: low complexity. Arg573 carries the omega-N-methylarginine modification. Phosphoserine is present on Ser580.

It belongs to the SMAUG family.

It localises to the cytoplasm. It is found in the cell projection. The protein resides in the dendrite. The protein localises to the synapse. Its subcellular location is the synaptosome. Functionally, acts as a translational repressor of SRE-containing messengers. This is Protein Smaug homolog 1 (SAMD4A) from Homo sapiens (Human).